We begin with the raw amino-acid sequence, 258 residues long: Pro-thyrotropin-releasing hormone-A (258 aa).

The N-terminal stretch at 1-22 (MKSACLIILASLVVCNLTLARG) is a signal peptide. The residue at position 78 (Gln-78) is a Pyrrolidone carboxylic acid. Proline amide is present on Pro-80. 2 stretches are compositionally biased toward basic and acidic residues: residues 84–98 (YQEE…GKRE) and 107–119 (EVQK…KRED). The tract at residues 84–124 (YQEELEKRQHPGKREEDEDEDYDEVQKRQHPGKREDEFDSF) is disordered. Gln-92 carries the post-translational modification Pyrrolidone carboxylic acid. The residue at position 94 (Pro-94) is a Proline amide. At Gln-112 the chain carries Pyrrolidone carboxylic acid. Residue Pro-114 is modified to Proline amide. Gln-131 is subject to Pyrrolidone carboxylic acid. A Proline amide modification is found at Pro-133. Gln-156 carries the pyrrolidone carboxylic acid modification. Residue Pro-158 is modified to Proline amide. Disordered stretches follow at residues 166-215 (YSKR…PCDV) and 236-258 (SRAE…TEQE). Gln-170 bears the Pyrrolidone carboxylic acid mark. Position 172 is a proline amide (Pro-172). Over residues 184-193 (GDLRELEKRQ) the composition is skewed to basic and acidic residues. Gln-193 bears the Pyrrolidone carboxylic acid mark. A Proline amide modification is found at Pro-195. At Gln-242 the chain carries Pyrrolidone carboxylic acid. At Pro-244 the chain carries Proline amide.

This sequence belongs to the TRH family.

It localises to the secreted. In terms of biological role, functions as a regulator of the biosynthesis of TSH in the anterior pituitary gland and as a neurotransmitter/ neuromodulator in the central and peripheral nervous systems. In Oncorhynchus nerka (Sockeye salmon), this protein is Pro-thyrotropin-releasing hormone-A (trha).